The sequence spans 483 residues: Alginate biosynthesis protein AlgA (483 aa).

This sequence belongs to the mannose-6-phosphate isomerase type 2 family. In terms of assembly, monomer. It depends on Co(2+) as a cofactor.

It catalyses the reaction D-mannose 6-phosphate = D-fructose 6-phosphate. It carries out the reaction alpha-D-mannose 1-phosphate + GTP + H(+) = GDP-alpha-D-mannose + diphosphate. The protein operates within nucleotide-sugar biosynthesis; GDP-alpha-D-mannose biosynthesis; GDP-alpha-D-mannose from alpha-D-mannose 1-phosphate (GTP route): step 1/1. Its pathway is nucleotide-sugar biosynthesis; GDP-alpha-D-mannose biosynthesis; alpha-D-mannose 1-phosphate from D-fructose 6-phosphate: step 1/2. In terms of biological role, produces a precursor for alginate polymerization. The alginate layer provides a protective barrier against host immune defenses and antibiotics. This is Alginate biosynthesis protein AlgA (algA) from Pseudomonas fluorescens.